Consider the following 403-residue polypeptide: Guanine nucleotide-binding protein alpha-8 subunit (403 aa).

The N-myristoyl glycine moiety is linked to residue glycine 2. Cysteine 3 carries the S-palmitoyl cysteine lipid modification. The G-alpha domain maps to 31-356 (LDFRILLLGA…KVLMKATKDL (326 aa)). Residues 34–47 (RILLLGAGESGKST) form a G1 motif region. GTP contacts are provided by residues 39–46 (GAGESGKS), 174–180 (IMTRVRT), 199–203 (DVGGQ), 268–271 (NKKD), and alanine 324. 2 residues coordinate Mg(2+): serine 46 and threonine 180. The G2 motif stretch occupies residues 172–180 (DCIMTRVRT). Positions 195-204 (FRVVDVGGQR) are G3 motif. The interval 264–271 (FLVLNKKD) is G4 motif. Positions 322-327 (IAARYK) are G5 motif. Residues 353–403 (TKDLKKSSKQSSKSSLGNSTQNNSNNNNNNNNSNNNNGQTTIDGATAKINS) form a disordered region. Low complexity predominate over residues 374-389 (NNSNNNNNNNNSNNNN). The segment covering 390-403 (GQTTIDGATAKINS) has biased composition (polar residues).

This sequence belongs to the G-alpha family. In terms of assembly, g proteins are composed of 3 units; alpha, beta and gamma. The alpha chain contains the guanine nucleotide binding site.

Its function is as follows. Guanine nucleotide-binding proteins (G proteins) are involved as modulators or transducers in various transmembrane signaling systems. G alpha-8 is a potential analog for the G(s)-like G-proteins which stimulate adenylate cyclase in mammals. This is Guanine nucleotide-binding protein alpha-8 subunit (gpaH) from Dictyostelium discoideum (Social amoeba).